Reading from the N-terminus, the 191-residue chain is Peptidyl-tRNA hydrolase (191 aa).

Tyr-16 serves as a coordination point for tRNA. The active-site Proton acceptor is His-21. Residues Phe-67, Asn-69, and Asn-115 each coordinate tRNA.

This sequence belongs to the PTH family. In terms of assembly, monomer.

It localises to the cytoplasm. The catalysed reaction is an N-acyl-L-alpha-aminoacyl-tRNA + H2O = an N-acyl-L-amino acid + a tRNA + H(+). In terms of biological role, hydrolyzes ribosome-free peptidyl-tRNAs (with 1 or more amino acids incorporated), which drop off the ribosome during protein synthesis, or as a result of ribosome stalling. Its function is as follows. Catalyzes the release of premature peptidyl moieties from peptidyl-tRNA molecules trapped in stalled 50S ribosomal subunits, and thus maintains levels of free tRNAs and 50S ribosomes. This Ruthia magnifica subsp. Calyptogena magnifica protein is Peptidyl-tRNA hydrolase.